We begin with the raw amino-acid sequence, 208 residues long: NAD(P)H-quinone oxidoreductase subunit I (208 aa).

2 4Fe-4S ferredoxin-type domains span residues 55–84 and 95–124; these read GRIHYEFDKCIACEVCVRVCPINLPVVDWV and RNYSIDFGVCIFCGNCVEYCPTNCLSMTEE. [4Fe-4S] cluster is bound by residues cysteine 64, cysteine 67, cysteine 70, cysteine 74, cysteine 104, cysteine 107, cysteine 110, and cysteine 114.

The protein belongs to the complex I 23 kDa subunit family. NDH-1 is composed of at least 11 different subunits. [4Fe-4S] cluster serves as cofactor.

The protein resides in the cellular thylakoid membrane. The catalysed reaction is a plastoquinone + NADH + (n+1) H(+)(in) = a plastoquinol + NAD(+) + n H(+)(out). It carries out the reaction a plastoquinone + NADPH + (n+1) H(+)(in) = a plastoquinol + NADP(+) + n H(+)(out). Functionally, NDH-1 shuttles electrons from an unknown electron donor, via FMN and iron-sulfur (Fe-S) centers, to quinones in the respiratory and/or the photosynthetic chain. The immediate electron acceptor for the enzyme in this species is believed to be plastoquinone. Couples the redox reaction to proton translocation, and thus conserves the redox energy in a proton gradient. The protein is NAD(P)H-quinone oxidoreductase subunit I of Prochlorococcus marinus (strain MIT 9515).